The following is a 404-amino-acid chain: Diaminopropionate ammonia-lyase (404 aa).

Lysine 78 carries the N6-(pyridoxal phosphate)lysine modification.

This sequence belongs to the diaminopropionate ammonia-lyase family. In terms of assembly, homodimer. The cofactor is pyridoxal 5'-phosphate.

The catalysed reaction is (S)-2,3-diaminopropanoate + H2O + H(+) = pyruvate + 2 NH4(+). It catalyses the reaction (R)-2,3-diaminopropanoate + H2O + H(+) = pyruvate + 2 NH4(+). Competitively inhibited by L- and D-alanine. Functionally, catalyzes the alpha,beta-elimination reaction of both L- and D-alpha,beta-diaminopropionate (DAP) to form pyruvate and ammonia. In vitro L- and D-isomers of serine are also degraded, though slowly; it is the only serine dehydratase which can eliminate an amino group at the beta-carbon position. In vivo L-, D- and a mixure of DL-DAP allow growth. DL-DAP is toxic in the absence of this enzyme, it may inhibit enzymes involved in the synthesis of pyruvate and aspartate, as well as amino acids derived from them. The chain is Diaminopropionate ammonia-lyase (dpaL) from Salmonella typhimurium (strain LT2 / SGSC1412 / ATCC 700720).